Consider the following 657-residue polypeptide: Penicillin-binding protein activator LpoA (657 aa).

The signal sequence occupies residues 1-25 (MLSSTFVRSKAGLVPVILAALILAA). The N-palmitoyl cysteine moiety is linked to residue cysteine 26. The S-diacylglycerol cysteine moiety is linked to residue cysteine 26.

The protein belongs to the LpoA family. As to quaternary structure, interacts with PBP1a.

The protein resides in the cell outer membrane. In terms of biological role, regulator of peptidoglycan synthesis that is essential for the function of penicillin-binding protein 1A (PBP1a). This is Penicillin-binding protein activator LpoA from Yersinia pestis bv. Antiqua (strain Angola).